The primary structure comprises 456 residues: F-box/FBD/LRR-repeat protein At3g52680 (456 aa).

Residues 20–73 (KDRISELPDGLLLKILSSLPTNIVVATSVLSKQWRSLWKLVPNLEFDSDDYESE) form the F-box domain. LRR repeat units follow at residues 74 to 100 (HYTF…RLKF), 102 to 127 (NFNP…VLDF), 152 to 179 (TLKL…HLEF), 180 to 205 (VRYK…RLYR), 225 to 252 (TIHD…LIEE), 270 to 295 (IAEV…LLNL), and 318 to 344 (TREA…KLTD). Positions 358–409 (KWNEPKDVPECLLSQLETFVWRRFDWGREEEKEIATYILKNGRRLKKATFST) constitute an FBD domain.

The protein is F-box/FBD/LRR-repeat protein At3g52680 of Arabidopsis thaliana (Mouse-ear cress).